The primary structure comprises 602 residues: Proteasome-associated ATPase (602 aa).

Residues P13–Q89 are a coiled coil. Residue G289–L294 coordinates ATP. The docks into pockets in the proteasome alpha-ring stretch occupies residues Y601 to L602.

Belongs to the AAA ATPase family. Homohexamer. Assembles into a hexameric ring structure that caps the 20S proteasome core. Strongly interacts with the prokaryotic ubiquitin-like protein Pup through a hydrophobic interface; the interacting region of ARC lies in its N-terminal coiled-coil domain. There is one Pup binding site per ARC hexamer ring. Upon ATP-binding, the C-terminus of ARC interacts with the alpha-rings of the proteasome core, possibly by binding to the intersubunit pockets.

Its pathway is protein degradation; proteasomal Pup-dependent pathway. Its function is as follows. ATPase which is responsible for recognizing, binding, unfolding and translocation of pupylated proteins into the bacterial 20S proteasome core particle. May be essential for opening the gate of the 20S proteasome via an interaction with its C-terminus, thereby allowing substrate entry and access to the site of proteolysis. Thus, the C-termini of the proteasomal ATPase may function like a 'key in a lock' to induce gate opening and therefore regulate proteolysis. This Mycobacteroides abscessus (strain ATCC 19977 / DSM 44196 / CCUG 20993 / CIP 104536 / JCM 13569 / NCTC 13031 / TMC 1543 / L948) (Mycobacterium abscessus) protein is Proteasome-associated ATPase.